Here is a 120-residue protein sequence, read N- to C-terminus: Ribosome-binding factor A (120 aa).

This sequence belongs to the RbfA family. In terms of assembly, monomer. Binds 30S ribosomal subunits, but not 50S ribosomal subunits or 70S ribosomes.

It is found in the cytoplasm. Functionally, one of several proteins that assist in the late maturation steps of the functional core of the 30S ribosomal subunit. Associates with free 30S ribosomal subunits (but not with 30S subunits that are part of 70S ribosomes or polysomes). Required for efficient processing of 16S rRNA. May interact with the 5'-terminal helix region of 16S rRNA. This chain is Ribosome-binding factor A, found in Verminephrobacter eiseniae (strain EF01-2).